The sequence spans 216 residues: Probable GH family 25 lysozyme 5 (216 aa).

An N-terminal signal peptide occupies residues 1–20 (MRFIISLLFVFTLIFNLAFS). A Ch-type lysozyme domain is found at 21–216 (HIGIDVSSGT…GLGIDKNYWE (196 aa)). Residue Asp25 is part of the active site. A glycan (N-linked (GlcNAc...) asparagine) is linked at Asn31. Active-site residues include Asp113 and Glu115.

Belongs to the glycosyl hydrolase 25 family.

The protein localises to the secreted. It catalyses the reaction Hydrolysis of (1-&gt;4)-beta-linkages between N-acetylmuramic acid and N-acetyl-D-glucosamine residues in a peptidoglycan and between N-acetyl-D-glucosamine residues in chitodextrins.. The protein is Probable GH family 25 lysozyme 5 of Dictyostelium discoideum (Social amoeba).